Here is a 176-residue protein sequence, read N- to C-terminus: NAD(P)H-quinone oxidoreductase subunit 6, chloroplastic (176 aa).

A run of 5 helical transmembrane segments spans residues 10 to 30 (FLLV…VLLT), 32 to 52 (PIFS…LYIL), 63 to 83 (LLIY…FMNG), 92 to 112 (LWTV…ISLI), and 152 to 172 (FFLP…GAIV).

The protein belongs to the complex I subunit 6 family. In terms of assembly, NDH is composed of at least 16 different subunits, 5 of which are encoded in the nucleus.

The protein localises to the plastid. It localises to the chloroplast thylakoid membrane. It carries out the reaction a plastoquinone + NADH + (n+1) H(+)(in) = a plastoquinol + NAD(+) + n H(+)(out). The catalysed reaction is a plastoquinone + NADPH + (n+1) H(+)(in) = a plastoquinol + NADP(+) + n H(+)(out). Functionally, NDH shuttles electrons from NAD(P)H:plastoquinone, via FMN and iron-sulfur (Fe-S) centers, to quinones in the photosynthetic chain and possibly in a chloroplast respiratory chain. The immediate electron acceptor for the enzyme in this species is believed to be plastoquinone. Couples the redox reaction to proton translocation, and thus conserves the redox energy in a proton gradient. The chain is NAD(P)H-quinone oxidoreductase subunit 6, chloroplastic (ndhG) from Lotus japonicus (Lotus corniculatus var. japonicus).